The following is a 367-amino-acid chain: Probable neutral protease 2 homolog MCYG_00239 (367 aa).

Positions 1 to 19 are cleaved as a signal peptide; that stretch reads MQVLVALAALSSLAAPVVG. A propeptide spanning residues 20-190 is cleaved from the precursor; that stretch reads FSIPRGVPVS…DGPFTRIDKR (171 aa). Cystine bridges form between Cys198–Cys268, Cys275–Cys293, and Cys307–Cys367. His318 serves as a coordination point for Zn(2+). Glu319 is an active-site residue. Zn(2+)-binding residues include His322 and Asp333.

The protein belongs to the peptidase M35 family. The cofactor is Zn(2+).

The protein resides in the secreted. The enzyme catalyses Preferential cleavage of bonds with hydrophobic residues in P1'. Also 3-Asn-|-Gln-4 and 8-Gly-|-Ser-9 bonds in insulin B chain.. Its function is as follows. Probable secreted metalloprotease that shows high activities on basic nuclear substrates such as histone and protamine. May be involved in virulence. This chain is Probable neutral protease 2 homolog MCYG_00239, found in Arthroderma otae (strain ATCC MYA-4605 / CBS 113480) (Microsporum canis).